The chain runs to 215 residues: 25 kDa ookinete surface antigen (215 aa).

The first 16 residues, 1–16 (MNMSYLFFFFFIQLVL), serve as a signal peptide directing secretion. The EGF-like 1; truncated domain occupies 29–58 (CKDGFLIQMSNHFECNCNPGFVLTSESTCE). 3 consecutive EGF-like domains span residues 59–104 (NKVE…SICV), 104–148 (VPNE…NTCT), and 151–191 (GQTE…NACI). Disulfide bonds link cysteine 63-cysteine 78, cysteine 72-cysteine 90, cysteine 92-cysteine 103, cysteine 108-cysteine 118, cysteine 113-cysteine 131, cysteine 133-cysteine 147, cysteine 155-cysteine 166, cysteine 159-cysteine 175, and cysteine 177-cysteine 190. Asparagine 144 and asparagine 163 each carry an N-linked (GlcNAc...) asparagine glycan. Residue serine 192 is the site of GPI-anchor amidated serine attachment. A propeptide spans 193 to 215 (FSLFNILNLSIIFIISLIYFYII) (removed in mature form). N-linked (GlcNAc...) asparagine glycosylation is present at asparagine 200.

Its subcellular location is the cell membrane. This is 25 kDa ookinete surface antigen from Plasmodium gallinaceum.